The following is an 86-amino-acid chain: MKVSVVITLAVLGVMFVWASAAELEERGSDQRDSPAWIKSMERIFQSEERECTKFLGGCSEDSECCPHLGCKDVLYYCAWDGTFGK.

The N-terminal stretch at 1–21 is a signal peptide; it reads MKVSVVITLAVLGVMFVWASA. The propeptide occupies 22 to 50; that stretch reads AELEERGSDQRDSPAWIKSMERIFQSEER. Intrachain disulfides connect cysteine 52–cysteine 66, cysteine 59–cysteine 71, and cysteine 65–cysteine 78. Phenylalanine amide is present on phenylalanine 84.

Belongs to the neurotoxin 10 (Hwtx-1) family. 37 (Jztx-31) subfamily. In terms of tissue distribution, expressed by the venom gland.

The protein localises to the secreted. Functionally, inhibits both peak current and fast inactivation of voltage-gated sodium channels (Nav) channels. Inhibits the inactivation of Nav on DRG neurons (EC(50)=1.77 uM) and peak current of cardiac myocytes (IC(50)=0.90 uM). This Chilobrachys guangxiensis (Chinese earth tiger tarantula) protein is Mu-theraphotoxin-Cg2a 2.